Consider the following 229-residue polypeptide: Potassium/proton antiporter CemA (229 aa).

Helical transmembrane passes span 7-27 (LTPF…SLSF), 106-126 (IVLH…YYFL), and 189-209 (IISG…KYWI).

It belongs to the CemA family.

It localises to the plastid. It is found in the chloroplast inner membrane. It catalyses the reaction K(+)(in) + H(+)(out) = K(+)(out) + H(+)(in). Functionally, contributes to K(+)/H(+) antiport activity by supporting proton efflux to control proton extrusion and homeostasis in chloroplasts in a light-dependent manner to modulate photosynthesis. Prevents excessive induction of non-photochemical quenching (NPQ) under continuous-light conditions. Indirectly promotes efficient inorganic carbon uptake into chloroplasts. The chain is Potassium/proton antiporter CemA from Calycanthus floridus var. glaucus (Eastern sweetshrub).